We begin with the raw amino-acid sequence, 132 residues long: Small heat shock protein hspL (132 aa).

In terms of domain architecture, sHSP spans 15–131 (TFTNFVSAPV…VKMSNNNKVE (117 aa)).

It belongs to the small heat shock protein (HSP20) family.

The polypeptide is Small heat shock protein hspL (hspL) (Dictyostelium discoideum (Social amoeba)).